An 879-amino-acid polypeptide reads, in one-letter code: DNA mismatch repair protein MutS (879 aa).

629 to 636 (GPNMGGKS) lines the ATP pocket.

This sequence belongs to the DNA mismatch repair MutS family.

This protein is involved in the repair of mismatches in DNA. It is possible that it carries out the mismatch recognition step. This protein has a weak ATPase activity. This is DNA mismatch repair protein MutS from Erythrobacter litoralis (strain HTCC2594).